We begin with the raw amino-acid sequence, 860 residues long: MQEQYRPDLIEADVQKYWAEKKTFKAVKDPFKEKYYCLSMFPYPSGRLHMGHVRNYTIGDVISRYQRMNGKNVLQPMGWDAFGLPAEGAAIKNKTAPAKWTYENIEYMKNQLKVLGFGFDWDREITTCKPEYYKWEQWFFTELYKKGLVYKKTSTVNWCPNDETVLANEQVHEGGCWRCDTPVEQKEIPQWFIKITDYAEQLLSDLDQLPEWPDMVKTMQRNWIGRSEGVEITFNVAHSDQTLTVYTTRPDTFYGVSYLAVAAAHPLAENAAKNNPELAAFIHEAKNTKVAEAELATMEKKGMATGLYAVHPMTGKQLPIWVANFVLMHYGTGAVMAVPAHDQRDYEFAQKYQLPLFPVIKPADNSAWDFSKQAYTEHGITINSAEFDGLDFEATFNGIADKLEKIGVGKRQVNYRLRDWGVSRQRYWGAPIPMLTLENGDVVVAPLQDLPIVLPEDVVMDGVKSPIKADPEWAKTTYNGQVALKETDTFDTFMESSWYYARYTSPQYQQAMLDADETNYWLPVDQYIGGIEHATMHLLYFRFFHKLLRDAGFVTSDEPSKKLLCQGMVLADAFYYTSPTNERIWVSPTKVTLERDEKGRIIKAVDDEGHELVHSGMTKMSKSKNNGIDPQEMVEKYGADTVRLFMMFASPAEMTLEWQESGVEGANRFLRRLWNLVFEYNQNPAQTALDPTALSVEQKALRREVHKTIAKVSDDIGRRQTFNTAIAAIMELMNKLTKASLSNEQDRAVMAEALNAVVRMLYPITPHICFQLWQDLGNESAIDFAPWVIADAEAMVEDEKLVVIQVNGKVRAKVTVPADMSEDEIKQVALAEENVQKFLNGLTVVKTIYVPGKLFSFVAK.

The short motif at 42–52 is the 'HIGH' region element; that stretch reads PYPSGRLHMGH. A 'KMSKS' region motif is present at residues 619 to 623; that stretch reads KMSKS. Lysine 622 contributes to the ATP binding site.

It belongs to the class-I aminoacyl-tRNA synthetase family.

The protein localises to the cytoplasm. The enzyme catalyses tRNA(Leu) + L-leucine + ATP = L-leucyl-tRNA(Leu) + AMP + diphosphate. The protein is Leucine--tRNA ligase of Histophilus somni (strain 2336) (Haemophilus somnus).